We begin with the raw amino-acid sequence, 243 residues long: tRNA pseudouridine synthase A (243 aa).

Catalysis depends on Asp-53, which acts as the Nucleophile. Tyr-111 provides a ligand contact to substrate.

This sequence belongs to the tRNA pseudouridine synthase TruA family. As to quaternary structure, homodimer.

It carries out the reaction uridine(38/39/40) in tRNA = pseudouridine(38/39/40) in tRNA. Formation of pseudouridine at positions 38, 39 and 40 in the anticodon stem and loop of transfer RNAs. This Pelodictyon phaeoclathratiforme (strain DSM 5477 / BU-1) protein is tRNA pseudouridine synthase A.